The sequence spans 128 residues: Lymphocyte antigen 6 complex locus protein G5c (128 aa).

An N-terminal signal peptide occupies residues 1–29; it reads MGAEYGCLPSTSQALYVILLIVLVRMSLV. The region spanning 37–128 is the UPAR/Ly6 domain; sequence LRCYRCLLET…NPQNRVFYIP (92 aa). 5 disulfide bridges follow: cysteine 39–cysteine 66, cysteine 42–cysteine 51, cysteine 58–cysteine 85, cysteine 94–cysteine 111, and cysteine 112–cysteine 117. N-linked (GlcNAc...) asparagine glycosylation is present at asparagine 73.

In terms of assembly, forms oligomers. N-glycosylated. Abundantly expressed in the epididymis.

It is found in the secreted. Functionally, may have a role in hematopoietic cell differentiation. The sequence is that of Lymphocyte antigen 6 complex locus protein G5c (LY6G5C) from Canis lupus familiaris (Dog).